A 311-amino-acid chain; its full sequence is Ribosomal RNA small subunit methyltransferase H (311 aa).

S-adenosyl-L-methionine contacts are provided by residues 33–35 (GGH), D53, F77, D98, and Q105.

Belongs to the methyltransferase superfamily. RsmH family.

The protein localises to the cytoplasm. The catalysed reaction is cytidine(1402) in 16S rRNA + S-adenosyl-L-methionine = N(4)-methylcytidine(1402) in 16S rRNA + S-adenosyl-L-homocysteine + H(+). Its function is as follows. Specifically methylates the N4 position of cytidine in position 1402 (C1402) of 16S rRNA. This is Ribosomal RNA small subunit methyltransferase H from Thiobacillus denitrificans (strain ATCC 25259 / T1).